Reading from the N-terminus, the 241-residue chain is Orotidine 5'-phosphate decarboxylase (241 aa).

Residues D16, K37, 64-73, T128, R190, Q199, G219, and R220 each bind substrate; that span reads DLKFHDIPTT. K66 functions as the Proton donor in the catalytic mechanism.

This sequence belongs to the OMP decarboxylase family. Type 1 subfamily. As to quaternary structure, homodimer.

It catalyses the reaction orotidine 5'-phosphate + H(+) = UMP + CO2. It functions in the pathway pyrimidine metabolism; UMP biosynthesis via de novo pathway; UMP from orotate: step 2/2. Functionally, catalyzes the decarboxylation of orotidine 5'-monophosphate (OMP) to uridine 5'-monophosphate (UMP). This is Orotidine 5'-phosphate decarboxylase from Prochlorococcus marinus (strain NATL2A).